The primary structure comprises 276 residues: Glutamate racemase (276 aa).

Residues 10–11 (DS) and 42–43 (YG) contribute to the substrate site. Catalysis depends on C74, which acts as the Proton donor/acceptor. 75 to 76 (NT) contributes to the substrate binding site. C185 (proton donor/acceptor) is an active-site residue. Residue 186–187 (TH) participates in substrate binding.

It belongs to the aspartate/glutamate racemases family.

The catalysed reaction is L-glutamate = D-glutamate. It participates in cell wall biogenesis; peptidoglycan biosynthesis. In terms of biological role, provides the (R)-glutamate required for cell wall biosynthesis. The sequence is that of Glutamate racemase from Levilactobacillus brevis (Lactobacillus brevis).